The chain runs to 239 residues: tRNA (guanine-N(7)-)-methyltransferase (239 aa).

S-adenosyl-L-methionine is bound by residues E69, E94, D121, and D144. D144 is a catalytic residue. Substrate is bound at residue K148. The tract at residues 150 to 155 (RHNKRR) is interaction with RNA. Substrate-binding positions include D180 and 217-220 (TKFE).

It belongs to the class I-like SAM-binding methyltransferase superfamily. TrmB family. As to quaternary structure, monomer.

It carries out the reaction guanosine(46) in tRNA + S-adenosyl-L-methionine = N(7)-methylguanosine(46) in tRNA + S-adenosyl-L-homocysteine. It participates in tRNA modification; N(7)-methylguanine-tRNA biosynthesis. In terms of biological role, catalyzes the formation of N(7)-methylguanine at position 46 (m7G46) in tRNA. The chain is tRNA (guanine-N(7)-)-methyltransferase from Yersinia pseudotuberculosis serotype O:1b (strain IP 31758).